Consider the following 63-residue polypeptide: Sarcotoxin-1B (63 aa).

A signal peptide spans 1–23 (MNFNKVFIFVALILAVFAGQSQA). Arginine amide is present on Arg-62.

It belongs to the cecropin family.

The protein resides in the secreted. In terms of biological role, sarcotoxins, which are potent bactericidal proteins, are produced in response to injury. They are cytotoxic to both Gram-positive and Gram-negative bacteria. The polypeptide is Sarcotoxin-1B (Sarcophaga peregrina (Flesh fly)).